Reading from the N-terminus, the 340-residue chain is Protein-arginine kinase (340 aa).

In terms of domain architecture, Phosphagen kinase C-terminal spans 21-242; that stretch reads VVLSSRIRLA…EQIIMQERVA (222 aa). Residues 24-28, His-79, Arg-113, 164-168, and 195-200 each bind ATP; these read SSRIR, RASVM, and RGIYGE.

It belongs to the ATP:guanido phosphotransferase family.

The catalysed reaction is L-arginyl-[protein] + ATP = N(omega)-phospho-L-arginyl-[protein] + ADP + H(+). Functionally, catalyzes the specific phosphorylation of arginine residues in proteins. The polypeptide is Protein-arginine kinase (Listeria monocytogenes serovar 1/2a (strain ATCC BAA-679 / EGD-e)).